We begin with the raw amino-acid sequence, 349 residues long: Phloroglucinol synthase (349 aa).

The active site involves Cys138.

This sequence belongs to the thiolase-like superfamily. Chalcone/stilbene synthases family.

It carries out the reaction 3 malonyl-CoA + 3 H(+) = 1,3,5-trihydroxybenzene + 3 CO2 + 3 CoA. It participates in antibiotic biosynthesis. Functionally, type III polyketide synthase that catalyzes the synthesis of phloroglucinol from three molecules of malonyl-CoA. In addition to its ability to produce phloroglucinol from malonyl-CoA, it exhibits broad substrate specificity, accepting C4-C12 aliphatic acyl-CoAs and phenylacetyl-CoA as the starters to form C6-polyoxoalkylated alpha-pyrones from sequential condensation with malonyl-CoA. The polypeptide is Phloroglucinol synthase (Pseudomonas fluorescens (strain ATCC BAA-477 / NRRL B-23932 / Pf-5)).